The following is a 373-amino-acid chain: P2Y purinoceptor 1 (373 aa).

Topologically, residues 1–51 (MTEVLWPAVPNGTDAAFLAGPGSSWGNSTVASTAAVSSSFKCALTKTGFQF) are extracellular. 2 N-linked (GlcNAc...) asparagine glycosylation sites follow: asparagine 11 and asparagine 27. Intrachain disulfides connect cysteine 42/cysteine 296 and cysteine 124/cysteine 202. ADP is bound at residue lysine 46. Residues 52-74 (YYLPAVYILVFIIGFLGNSVAIW) form a helical membrane-spanning segment. The Cytoplasmic portion of the chain corresponds to 75 to 87 (MFVFHMKPWSGIS). Residues 88-109 (VYMFNLALADFLYVLTLPALIF) traverse the membrane as a helical segment. Residues 110 to 125 (YYFNKTDWIFGDAMCK) lie on the Extracellular side of the membrane. An N-linked (GlcNAc...) asparagine glycan is attached at asparagine 113. The helical transmembrane segment at 126 to 147 (LQRFIFHVNLYGSILFLTCISA) threads the bilayer. Topologically, residues 148-166 (HRYSGVVYPLKSLGRLKKK) are cytoplasmic. A helical membrane pass occupies residues 167–188 (NAICISVLVWLIVVVAISPILF). Residues 189–214 (YSGTGVRKNKTITCYDTTSDEYLRSY) lie on the Extracellular side of the membrane. Asparagine 197 is a glycosylation site (N-linked (GlcNAc...) asparagine). Residue 203–205 (YDT) participates in ADP binding. Residues 215–237 (FIYSMCTTVAMFCVPLVLILGCY) form a helical membrane-spanning segment. At 238-260 (GLIVRALIYKDLDNSPLRRKSIY) the chain is on the cytoplasmic side. Residues 261–284 (LVIIVLTVFAVSYIPFHVMKTMNL) form a helical membrane-spanning segment. ADP is bound by residues 283-287 (NLRAR), 303-306 (YATY), and arginine 310. The Extracellular portion of the chain corresponds to 285–303 (RARLDFQTPAMCAFNDRVY). The chain crosses the membrane as a helical span at residues 304–325 (ATYQVTRGLASLNSCVDPILYF). At 326–373 (LAGDTFRRRLSRATRKASRRSEANLQSKSEDMTLNILPEFKQNGDTSL) the chain is on the cytoplasmic side.

This sequence belongs to the G-protein coupled receptor 1 family.

It localises to the cell membrane. ATP functions as antagonist and inhibits ADP-induced mobilization of Ca(2+). The P2Y1 receptor-specific antagonists A3P5PS, A3P5P and A2P5P inhibit downstream signaling mediated by mobilization of Ca(2+) from intracellular stores, and platelet shape changes in response to extracellular ADP. Receptor for extracellular adenine nucleotides such as ADP. In platelets, binding to ADP leads to mobilization of intracellular calcium ions via activation of phospholipase C, a change in platelet shape, and ultimately platelet aggregation. In Homo sapiens (Human), this protein is P2Y purinoceptor 1 (P2RY1).